We begin with the raw amino-acid sequence, 224 residues long: Ribonuclease 3 (224 aa).

The 123-residue stretch at 5-127 (LERLCRRLNY…ILAAIYLDGG (123 aa)) folds into the RNase III domain. A Mg(2+)-binding site is contributed by Glu-40. Residue Asp-44 is part of the active site. Mg(2+)-binding residues include Asp-113 and Glu-116. Glu-116 is a catalytic residue. Residues 154–224 (DAKTQLQEFL…AKAMLEQLQG (71 aa)) enclose the DRBM domain.

It belongs to the ribonuclease III family. As to quaternary structure, homodimer. The cofactor is Mg(2+).

The protein localises to the cytoplasm. The catalysed reaction is Endonucleolytic cleavage to 5'-phosphomonoester.. Functionally, digests double-stranded RNA. Involved in the processing of primary rRNA transcript to yield the immediate precursors to the large and small rRNAs (23S and 16S). Processes some mRNAs, and tRNAs when they are encoded in the rRNA operon. Processes pre-crRNA and tracrRNA of type II CRISPR loci if present in the organism. This Legionella pneumophila (strain Lens) protein is Ribonuclease 3.